The primary structure comprises 150 residues: UPF0756 membrane protein PC1_1142 (150 aa).

The next 4 membrane-spanning stretches (helical) occupy residues 1 to 21 (MAYL…GIIS), 51 to 71 (YGLS…IASG), 82 to 102 (FLHW…WLGG), and 127 to 147 (ALFR…SLLI).

The protein belongs to the UPF0756 family.

It is found in the cell membrane. This is UPF0756 membrane protein PC1_1142 from Pectobacterium carotovorum subsp. carotovorum (strain PC1).